A 289-amino-acid polypeptide reads, in one-letter code: MRKLTSFACGTGAGLAAYYLQRLRDPQTAVQNSWTHSDKPVDPWALWDTNWDCREPRALVRPLRNSQPEEENRYNAELEKAKAKKARHIILVRHGEYLDVGDSDDTHHLTERGRKQAEFTGKRLCELGIKWDKVVASTMLRAQETSDIILKQIDFEKEKVVNCAFLREGAPIPPQPPVGHWKPEASQFLRDGSRIEAGFRRYFHRAYPDQEKESYTLIVGHGNVIRYFVCRALQFPAEGWLRININHASITWLTISPSGNVSIKYLGDSGFMPAELLTNRIPRDVKNVV.

The chain crosses the membrane as a helical span at residues 7-23 (FACGTGAGLAAYYLQRL).

The protein belongs to the phosphoglycerate mutase family. BPG-dependent PGAM subfamily. In terms of assembly, interacts with Pk92B/ASK1.

The protein resides in the mitochondrion outer membrane. The catalysed reaction is O-phospho-L-seryl-[protein] + H2O = L-seryl-[protein] + phosphate. The enzyme catalyses O-phospho-L-threonyl-[protein] + H2O = L-threonyl-[protein] + phosphate. Functionally, displays phosphatase activity for serine/threonine residues, and dephosphorylates and activates Pk92B kinase. Has apparently no phosphoglycerate mutase activity. The sequence is that of Serine/threonine-protein phosphatase Pgam5, mitochondrial from Drosophila simulans (Fruit fly).